A 426-amino-acid chain; its full sequence is Enolase (426 aa).

A (2R)-2-phosphoglycerate-binding site is contributed by Gln-165. Glu-209 functions as the Proton donor in the catalytic mechanism. Mg(2+) is bound by residues Asp-244, Glu-287, and Asp-313. Residues Lys-338, Arg-367, Ser-368, and Lys-389 each contribute to the (2R)-2-phosphoglycerate site. Lys-338 acts as the Proton acceptor in catalysis.

It belongs to the enolase family. It depends on Mg(2+) as a cofactor.

It localises to the cytoplasm. The protein resides in the secreted. It is found in the cell surface. It catalyses the reaction (2R)-2-phosphoglycerate = phosphoenolpyruvate + H2O. It functions in the pathway carbohydrate degradation; glycolysis; pyruvate from D-glyceraldehyde 3-phosphate: step 4/5. In terms of biological role, catalyzes the reversible conversion of 2-phosphoglycerate (2-PG) into phosphoenolpyruvate (PEP). It is essential for the degradation of carbohydrates via glycolysis. This chain is Enolase, found in Methanococcus maripaludis (strain C5 / ATCC BAA-1333).